The following is a 368-amino-acid chain: MPKPGELTFVAPRGAKKPPRHIADLTPAERKEAVAATGEKPFRAQQLSQHYFARYAHDPAEWTNIPAGSREKLAEALFPDLMSVMRHISCDDDTTRKTLWKLHDGTLVESVLMRYPDRVTMCISSQAGCGMNCPFCATGQAGLDRNLSTAEIVHQIVDGMRALRDGEVPGGPARLSNIVFMGMGEPLANYNRVVGAIRRLTDPEPDGLGLSQRGITVSTVGLVPAMLRFADEGFKCRLAVSLHAPDDELRDTLVPVNTRWNVREVLDAAWEYADKSGRRISIEYALIRDINDQAWRGDRLGRLLKGKRVHVNLIPLNPTPGSKWTASRPEDEKAFVEAVAAHGVPVTVRDTRGQEIDGACGQLAAAER.

Glu-109 functions as the Proton acceptor in the catalytic mechanism. Residues 115 to 355 (YPDRVTMCIS…VTVRDTRGQE (241 aa)) enclose the Radical SAM core domain. Cys-122 and Cys-360 are joined by a disulfide. Residues Cys-129, Cys-133, and Cys-136 each contribute to the [4Fe-4S] cluster site. S-adenosyl-L-methionine-binding positions include 184 to 185 (GE), Ser-218, 241 to 243 (SLH), and Asn-317. The active-site S-methylcysteine intermediate is Cys-360.

It belongs to the radical SAM superfamily. RlmN family. [4Fe-4S] cluster serves as cofactor.

It localises to the cytoplasm. It carries out the reaction adenosine(2503) in 23S rRNA + 2 reduced [2Fe-2S]-[ferredoxin] + 2 S-adenosyl-L-methionine = 2-methyladenosine(2503) in 23S rRNA + 5'-deoxyadenosine + L-methionine + 2 oxidized [2Fe-2S]-[ferredoxin] + S-adenosyl-L-homocysteine. The catalysed reaction is adenosine(37) in tRNA + 2 reduced [2Fe-2S]-[ferredoxin] + 2 S-adenosyl-L-methionine = 2-methyladenosine(37) in tRNA + 5'-deoxyadenosine + L-methionine + 2 oxidized [2Fe-2S]-[ferredoxin] + S-adenosyl-L-homocysteine. In terms of biological role, specifically methylates position 2 of adenine 2503 in 23S rRNA and position 2 of adenine 37 in tRNAs. The chain is Probable dual-specificity RNA methyltransferase RlmN from Streptomyces griseus subsp. griseus (strain JCM 4626 / CBS 651.72 / NBRC 13350 / KCC S-0626 / ISP 5235).